We begin with the raw amino-acid sequence, 309 residues long: L-aminoadipate-semialdehyde dehydrogenase-phosphopantetheinyl transferase (309 aa).

CoA contacts are provided by residues Arg47, 86–91 (RTSKGK), and 108–111 (NISH). 2 residues coordinate Mg(2+): Asp129 and Glu181. Residue 181-185 (ESFIK) coordinates CoA.

Belongs to the P-Pant transferase superfamily. AcpS family. Monomer. Mg(2+) serves as cofactor.

The protein localises to the cytoplasm. The protein resides in the cytosol. The enzyme catalyses apo-[ACP] + CoA = holo-[ACP] + adenosine 3',5'-bisphosphate + H(+). The catalysed reaction is apo-[ACP] + acetyl-CoA = acetyl-[ACP] + adenosine 3',5'-bisphosphate + H(+). In terms of biological role, catalyzes the post-translational modification of target proteins by phosphopantetheine. Can transfer the 4'-phosphopantetheine moiety from coenzyme A, regardless of whether the CoA is presented in the free thiol form or as an acetyl thioester, to a serine residue of a broad range of acceptors including the acyl carrier domain of FASN. In Mus musculus (Mouse), this protein is L-aminoadipate-semialdehyde dehydrogenase-phosphopantetheinyl transferase (Aasdhppt).